Here is a 695-residue protein sequence, read N- to C-terminus: GATA zinc finger domain-containing protein 16 (695 aa).

Disordered stretches follow at residues 82–111 (SPILASQQQQQHMQSSPILASSNLTNSNNA), 134–304 (VVNS…QQDK), and 422–472 (NNQF…KMRY). Composition is skewed to low complexity over residues 87–111 (SQQQQQHMQSSPILASSNLTNSNNA) and 140–149 (KTTTTNNKPP). Positions 150–174 (KQSKRKEKERLEEEKQTVAQQQQYQ) form a coiled coil. A compositionally biased stretch (basic and acidic residues) spans 155–165 (KEKERLEEEKQ). Over residues 199–209 (VSTTPYGNSQF) the composition is skewed to polar residues. Residues 210-298 (NNNNNNNNNN…NSNSNNNNNN (89 aa)) are compositionally biased toward low complexity. The span at 422 to 433 (NNQFSGDKQSAL) shows a compositional bias: polar residues. The span at 434–446 (NNVKNSKGGNTNN) shows a compositional bias: low complexity. The GATA-type zinc-finger motif lies at 479-504 (CHTCGVTNTPEWRRGPNGAKTLCNAC). The tract at residues 523–646 (NSTGVNITEP…TTNSITTPTT (124 aa)) is disordered. Composition is skewed to low complexity over residues 544–556 (DNNNNNNNSSDSN) and 564–646 (GSNN…TPTT).

The protein is GATA zinc finger domain-containing protein 16 (gtaP) of Dictyostelium discoideum (Social amoeba).